A 280-amino-acid polypeptide reads, in one-letter code: Pantothenate synthetase (280 aa).

32-39 (MGALHAGH) contacts ATP. His-39 acts as the Proton donor in catalysis. Gln-63 is a binding site for (R)-pantoate. Gln-63 provides a ligand contact to beta-alanine. Residue 149 to 152 (GEKD) coordinates ATP. A (R)-pantoate-binding site is contributed by Gln-155. ATP-binding positions include Val-178 and 186–189 (MSSR).

The protein belongs to the pantothenate synthetase family. In terms of assembly, homodimer.

Its subcellular location is the cytoplasm. It carries out the reaction (R)-pantoate + beta-alanine + ATP = (R)-pantothenate + AMP + diphosphate + H(+). Its pathway is cofactor biosynthesis; (R)-pantothenate biosynthesis; (R)-pantothenate from (R)-pantoate and beta-alanine: step 1/1. Catalyzes the condensation of pantoate with beta-alanine in an ATP-dependent reaction via a pantoyl-adenylate intermediate. The sequence is that of Pantothenate synthetase from Ruegeria sp. (strain TM1040) (Silicibacter sp.).